We begin with the raw amino-acid sequence, 560 residues long: Bifunctional NAD(P)H-hydrate repair enzyme (560 aa).

The segment at 1 to 241 (MLSRLSERCT…WMTAPERMRV (241 aa)) is NAD(P)H-hydrate epimerase. The region spanning 29–235 (LRDAEPAAAA…SLGLEDWMTA (207 aa)) is the YjeF N-terminal domain. The segment at 77–81 (NNGGD) is NADPHX 1; for epimerase activity. Positions 78 and 145 each coordinate K(+). Residues 149–155 (GTGICGP) are NADPHX 1; for epimerase activity. Residues Tyr160 and Asp178 each coordinate (6S)-NADPHX. Ser181 serves as a coordination point for K(+). In terms of domain architecture, YjeF C-terminal spans 249–547 (LDDVYEYFGI…HRVPLIVNAS (299 aa)). An ADP-dependent (S)-NAD(P)H-hydrate dehydratase region spans residues 249-560 (LDDVYEYFGI…PASRQRPSGQ (312 aa)). Gly351 is a (6S)-NADPHX binding site. The interval 417 to 423 (HPGEAAR) is NADPHX 2; for dehydratase activity. ADP contacts are provided by residues 454-458 (KGPGT) and 475-484 (NAGMASGGMG). Residue Asp485 coordinates (6S)-NADPHX.

In the N-terminal section; belongs to the NnrE/AIBP family. The protein in the C-terminal section; belongs to the NnrD/CARKD family. It depends on K(+) as a cofactor.

It carries out the reaction (6S)-NADHX + ADP = AMP + phosphate + NADH + H(+). It catalyses the reaction (6S)-NADPHX + ADP = AMP + phosphate + NADPH + H(+). The enzyme catalyses (6R)-NADHX = (6S)-NADHX. The catalysed reaction is (6R)-NADPHX = (6S)-NADPHX. Functionally, bifunctional enzyme that catalyzes the epimerization of the S- and R-forms of NAD(P)HX and the dehydration of the S-form of NAD(P)HX at the expense of ADP, which is converted to AMP. This allows the repair of both epimers of NAD(P)HX, a damaged form of NAD(P)H that is a result of enzymatic or heat-dependent hydration. The protein is Bifunctional NAD(P)H-hydrate repair enzyme of Leishmania major.